The sequence spans 190 residues: Peptidyl-tRNA hydrolase (190 aa).

Tyr14 contacts tRNA. His19 (proton acceptor) is an active-site residue. Residues Tyr64, Asn66, and Asn112 each coordinate tRNA.

It belongs to the PTH family. As to quaternary structure, monomer.

It is found in the cytoplasm. The catalysed reaction is an N-acyl-L-alpha-aminoacyl-tRNA + H2O = an N-acyl-L-amino acid + a tRNA + H(+). Hydrolyzes ribosome-free peptidyl-tRNAs (with 1 or more amino acids incorporated), which drop off the ribosome during protein synthesis, or as a result of ribosome stalling. Its function is as follows. Catalyzes the release of premature peptidyl moieties from peptidyl-tRNA molecules trapped in stalled 50S ribosomal subunits, and thus maintains levels of free tRNAs and 50S ribosomes. In Chlorobaculum parvum (strain DSM 263 / NCIMB 8327) (Chlorobium vibrioforme subsp. thiosulfatophilum), this protein is Peptidyl-tRNA hydrolase.